The sequence spans 291 residues: N-acetylmannosamine kinase (291 aa).

Residues 5-12 and 132-139 contribute to the ATP site; these read AIDIGGTK and GVGGGVVS. Zn(2+) contacts are provided by His-156, Cys-166, Cys-168, and Cys-173.

It belongs to the ROK (NagC/XylR) family. NanK subfamily. In terms of assembly, homodimer.

The catalysed reaction is an N-acyl-D-mannosamine + ATP = an N-acyl-D-mannosamine 6-phosphate + ADP + H(+). It functions in the pathway amino-sugar metabolism; N-acetylneuraminate degradation; D-fructose 6-phosphate from N-acetylneuraminate: step 2/5. Its function is as follows. Catalyzes the phosphorylation of N-acetylmannosamine (ManNAc) to ManNAc-6-P. The sequence is that of N-acetylmannosamine kinase from Escherichia fergusonii (strain ATCC 35469 / DSM 13698 / CCUG 18766 / IAM 14443 / JCM 21226 / LMG 7866 / NBRC 102419 / NCTC 12128 / CDC 0568-73).